The primary structure comprises 485 residues: Rhamnulokinase (485 aa).

Residue 8–12 (ASSGR) coordinates ATP. Residues Gly-78 and 231 to 233 (HDT) each bind substrate. Catalysis depends on Asp-232, which acts as the Proton acceptor. ATP is bound at residue Thr-254. Asn-291 is a substrate binding site. An ATP-binding site is contributed by Gln-299. Cys-348 and Cys-365 are oxidised to a cystine. Gly-397 is an ATP binding site. The cysteines at positions 408 and 412 are disulfide-linked.

This sequence belongs to the rhamnulokinase family. It depends on Mg(2+) as a cofactor.

The catalysed reaction is L-rhamnulose + ATP = L-rhamnulose 1-phosphate + ADP + H(+). The protein operates within carbohydrate degradation; L-rhamnose degradation; glycerone phosphate from L-rhamnose: step 2/3. Involved in the catabolism of L-rhamnose (6-deoxy-L-mannose). Catalyzes the transfer of the gamma-phosphate group from ATP to the 1-hydroxyl group of L-rhamnulose to yield L-rhamnulose 1-phosphate. The sequence is that of Rhamnulokinase from Yersinia pestis bv. Antiqua (strain Angola).